Consider the following 130-residue polypeptide: MYRAVTRNIEVQVRPFYLEDRSDPSENRYVWGYQITIDNQSDEFVQLLSRYWHITDGAGRVEEVRGPGVVGDQPELNPGDSYQYTSGCPLSTPSGIMVGHYTMRNKRGETFDIAIPAFSLDLPGTRRTVN.

Residues 3–127 (RAVTRNIEVQ…FSLDLPGTRR (125 aa)) enclose the ApaG domain.

The polypeptide is Protein ApaG (Mesorhizobium japonicum (strain LMG 29417 / CECT 9101 / MAFF 303099) (Mesorhizobium loti (strain MAFF 303099))).